The chain runs to 413 residues: Argininosuccinate synthase (413 aa).

8-16 (AYSGGLDTS) contacts ATP. Tyrosine 87 provides a ligand contact to L-citrulline. Residue glycine 117 participates in ATP binding. 3 residues coordinate L-aspartate: threonine 119, asparagine 123, and aspartate 124. Asparagine 123 is a binding site for L-citrulline. Residues arginine 127, serine 175, glutamate 259, and tyrosine 271 each contribute to the L-citrulline site.

Belongs to the argininosuccinate synthase family. Type 1 subfamily. In terms of assembly, homotetramer.

The protein localises to the cytoplasm. It catalyses the reaction L-citrulline + L-aspartate + ATP = 2-(N(omega)-L-arginino)succinate + AMP + diphosphate + H(+). It participates in amino-acid biosynthesis; L-arginine biosynthesis; L-arginine from L-ornithine and carbamoyl phosphate: step 2/3. The polypeptide is Argininosuccinate synthase (Micrococcus luteus (strain ATCC 4698 / DSM 20030 / JCM 1464 / CCM 169 / CCUG 5858 / IAM 1056 / NBRC 3333 / NCIMB 9278 / NCTC 2665 / VKM Ac-2230) (Micrococcus lysodeikticus)).